The primary structure comprises 243 residues: Probable HTH-type transcriptional regulator GfsR (243 aa).

The interval 154-179 (AAVARPDTSGSATGRTGDSSPSLALS) is disordered. A compositionally biased stretch (polar residues) spans 161–178 (TSGSATGRTGDSSPSLAL). The region spanning 171–236 (DSSPSLALSP…QALLRWLGHP (66 aa)) is the HTH luxR-type domain. Positions 195 to 214 (VREIAVEMRLAEKTVRNYLS) form a DNA-binding region, H-T-H motif.

Its pathway is antibiotic biosynthesis. Functionally, probable DNA-binding protein that contributes to the control of expression of the biosynthesis operon of the 16-membered macrolide antibiotics FD-891 and FD-892. Might be a member of a two-component regulatory system; the putative sensor kinase gene is unknown. In Streptomyces halstedii, this protein is Probable HTH-type transcriptional regulator GfsR.